Here is a 1023-residue protein sequence, read N- to C-terminus: Sodium/potassium-transporting ATPase subunit alpha-1 (1023 aa).

The propeptide occupies 1–5 (MGYGA). Residues 1-11 (MGYGAGRDKYE) are compositionally biased toward basic and acidic residues. The interval 1 to 34 (MGYGAGRDKYEPAATSEHGGKKGKGKGKDRDMEE) is disordered. Residues 6 to 87 (GRDKYEPAAT…NALTPPPTTP (82 aa)) lie on the Cytoplasmic side of the membrane. The residue at position 15 (Thr15) is a Phosphothreonine; by PKC. Phosphoserine; by PKC is present on Ser16. The interaction with phosphoinositide-3 kinase stretch occupies residues 82–84 (PPP). A helical transmembrane segment spans residues 88–108 (EWVKFCRQLFGGFSMLLWIGA). Residues 109-131 (ILCFLAYGIRKASDLEPDNDNLY) lie on the Extracellular side of the membrane. Residues 132 to 152 (LGVVLSAVVIITGCFSYYQEA) form a helical membrane-spanning segment. Over 153 to 288 (KSSRIMESFK…GGQTPIAVEI (136 aa)) the chain is Cytoplasmic. The segment at 215–235 (NSSLTGESEPQTRSPDFTNEN) is disordered. Residues 289 to 308 (GHFIHIITGVAVFLGVSFFI) form a helical membrane-spanning segment. The Extracellular portion of the chain corresponds to 309-320 (LSLILHYTWLEA). The chain crosses the membrane as a helical span at residues 321 to 338 (VIFLIGIIVANVPEGLLA). Topologically, residues 339-772 (TVTVCLTLTA…EEGRLIFDNL (434 aa)) are cytoplasmic. The active-site 4-aspartylphosphate intermediate is Asp376. Lys487 contacts ATP. Residues Asp717 and Asp721 each contribute to the Mg(2+) site. Residues 773-792 (KKSIAYTLTSNIPEITPFLI) traverse the membrane as a helical segment. At 793 to 802 (FIIADIPLPL) the chain is on the extracellular side. A helical membrane pass occupies residues 803 to 823 (GTVTILCIDLGTDMVPAISLA). The Cytoplasmic portion of the chain corresponds to 824 to 843 (YEQAESDIMKRQPRNPKKDK). Residues 844–866 (LVNERLISMAYGQIGMIQALGGF) form a helical membrane-spanning segment. Over 867-918 (FAYFVILAENGFLPSTLLGIRVAWEDRYVNDVEDSYGQQWTYEQRKIVEFTC) the chain is Extracellular. The helical transmembrane segment at 919-938 (HTAFFVSIVVVQWADLIICK) threads the bilayer. The Cytoplasmic segment spans residues 939–951 (TRRNSVFQQGMKN). A Phosphoserine; by PKA modification is found at Ser943. A helical membrane pass occupies residues 952 to 970 (KILIFGLFEETALAAFLSY). Topologically, residues 971-985 (CPGMDVALRMYPLKP) are extracellular. A helical membrane pass occupies residues 986–1006 (TWWFCAFPYSLLIFIYDEVRK). Over 1007-1023 (LILRRSPGGWVEKETYY) the chain is Cytoplasmic.

Belongs to the cation transport ATPase (P-type) (TC 3.A.3) family. Type IIC subfamily. In terms of assembly, the sodium/potassium-transporting ATPase is composed of a catalytic alpha subunit, an auxiliary non-catalytic beta subunit and an additional regulatory subunit. As to expression, mainly expressed in kidney. Found in bladder, colon, eye, and testis. Found in low levels in brain, heart, spleen and liver.

The protein localises to the cell membrane. It localises to the sarcolemma. The enzyme catalyses K(+)(out) + Na(+)(in) + ATP + H2O = K(+)(in) + Na(+)(out) + ADP + phosphate + H(+). With respect to regulation, this alpha subunit is resistant to ouabain. Functionally, this is the catalytic component of the active enzyme, which catalyzes the hydrolysis of ATP coupled with the exchange of sodium and potassium ions across the plasma membrane. This action creates the electrochemical gradient of sodium and potassium ions, providing the energy for active transport of various nutrients. This Rhinella marina (Cane toad) protein is Sodium/potassium-transporting ATPase subunit alpha-1 (ATP1A1).